We begin with the raw amino-acid sequence, 245 residues long: 2,3-bisphosphoglycerate-dependent phosphoglycerate mutase (245 aa).

Substrate-binding positions include 8–15 (RHGQSLWN), 21–22 (TG), Arg60, 87–90 (ERHY), Lys98, 114–115 (RR), and 183–184 (GN). His9 functions as the Tele-phosphohistidine intermediate in the catalytic mechanism. Glu87 serves as the catalytic Proton donor/acceptor.

This sequence belongs to the phosphoglycerate mutase family. BPG-dependent PGAM subfamily.

It catalyses the reaction (2R)-2-phosphoglycerate = (2R)-3-phosphoglycerate. The protein operates within carbohydrate degradation; glycolysis; pyruvate from D-glyceraldehyde 3-phosphate: step 3/5. In terms of biological role, catalyzes the interconversion of 2-phosphoglycerate and 3-phosphoglycerate. This chain is 2,3-bisphosphoglycerate-dependent phosphoglycerate mutase, found in Bacillus thuringiensis (strain Al Hakam).